The primary structure comprises 62 residues: Large ribosomal subunit protein bL28 (62 aa).

The interval 1–23 (MARRCFVTGKSAKAGNARSHSMR) is disordered.

This sequence belongs to the bacterial ribosomal protein bL28 family.

This is Large ribosomal subunit protein bL28 from Brevibacillus brevis (strain 47 / JCM 6285 / NBRC 100599).